Consider the following 357-residue polypeptide: 4-hydroxy-3-methylbut-2-en-1-yl diphosphate synthase (flavodoxin) (357 aa).

Cys264, Cys267, Cys299, and Glu306 together coordinate [4Fe-4S] cluster.

It belongs to the IspG family. [4Fe-4S] cluster is required as a cofactor.

It catalyses the reaction (2E)-4-hydroxy-3-methylbut-2-enyl diphosphate + oxidized [flavodoxin] + H2O + 2 H(+) = 2-C-methyl-D-erythritol 2,4-cyclic diphosphate + reduced [flavodoxin]. Its pathway is isoprenoid biosynthesis; isopentenyl diphosphate biosynthesis via DXP pathway; isopentenyl diphosphate from 1-deoxy-D-xylulose 5-phosphate: step 5/6. Functionally, converts 2C-methyl-D-erythritol 2,4-cyclodiphosphate (ME-2,4cPP) into 1-hydroxy-2-methyl-2-(E)-butenyl 4-diphosphate. The polypeptide is 4-hydroxy-3-methylbut-2-en-1-yl diphosphate synthase (flavodoxin) (Campylobacter jejuni subsp. jejuni serotype O:23/36 (strain 81-176)).